The chain runs to 819 residues: Ferric-pyoverdine 358 receptor (819 aa).

Positions Met-1–Ala-47 are cleaved as a signal peptide. Positions Asn-115 to Ser-122 match the TonB box motif. Residues Ser-166–Lys-276 enclose the TBDR plug domain. The 539-residue stretch at Glu-281–Phe-819 folds into the TBDR beta-barrel domain. The short motif at Tyr-802 to Phe-819 is the TonB C-terminal box element.

The protein belongs to the TonB-dependent receptor family.

It is found in the cell outer membrane. In terms of biological role, specific receptor for the siderophore ferric pyoverdine (pseudobactin) 358. The protein is Ferric-pyoverdine 358 receptor (pupA) of Pseudomonas putida (Arthrobacter siderocapsulatus).